The primary structure comprises 320 residues: Ferrochelatase (320 aa).

Positions 194 and 275 each coordinate Fe cation.

Belongs to the ferrochelatase family.

It is found in the cytoplasm. The catalysed reaction is heme b + 2 H(+) = protoporphyrin IX + Fe(2+). Its pathway is porphyrin-containing compound metabolism; protoheme biosynthesis; protoheme from protoporphyrin-IX: step 1/1. Functionally, catalyzes the ferrous insertion into protoporphyrin IX. In Vibrio cholerae serotype O1 (strain ATCC 39315 / El Tor Inaba N16961), this protein is Ferrochelatase.